We begin with the raw amino-acid sequence, 232 residues long: Anti-sigma-K factor RskA (232 aa).

Residues 1–90 (MTEHTDFELL…EVRRQSRWRT (90 aa)) are Cytoplasmic-facing. The helical transmembrane segment at 91–111 (AAFASAAAIAVGLGAFGLGVL) threads the bilayer. The Extracellular segment spans residues 112 to 232 (TRPSPPPTVA…GTILAELPLG (121 aa)).

It belongs to the anti-sigma-K factor family.

Its subcellular location is the cell membrane. Functionally, an anti-sigma factor for extracytoplasmic function (ECF) sigma factor SigK. ECF sigma factors are held in an inactive form by an anti-sigma factor until released by regulated intramembrane proteolysis (RIP). RIP occurs when an extracytoplasmic signal triggers a concerted proteolytic cascade to transmit information and elicit cellular responses. The membrane-spanning regulatory substrate protein is first cut extracytoplasmically (site-1 protease, S1P), then within the membrane itself (site-2 protease, S2P, Rip1), while cytoplasmic proteases finish degrading the regulatory protein, liberating the sigma factor. The protein is Anti-sigma-K factor RskA (rskA) of Mycobacterium tuberculosis (strain ATCC 25177 / H37Ra).